The primary structure comprises 448 residues: Tubulin beta chain (448 aa).

GTP-binding residues include glutamine 11, glutamate 69, serine 138, glycine 142, threonine 143, glycine 144, asparagine 204, and asparagine 226. Glutamate 69 lines the Mg(2+) pocket. The tract at residues 425–448 is disordered; the sequence is YQDASISEGEEEYLEEEEPLEHEE. The segment covering 432–448 has biased composition (acidic residues); sequence EGEEEYLEEEEPLEHEE.

The protein belongs to the tubulin family. In terms of assembly, dimer of alpha and beta chains. A typical microtubule is a hollow water-filled tube with an outer diameter of 25 nm and an inner diameter of 15 nM. Alpha-beta heterodimers associate head-to-tail to form protofilaments running lengthwise along the microtubule wall with the beta-tubulin subunit facing the microtubule plus end conferring a structural polarity. Microtubules usually have 13 protofilaments but different protofilament numbers can be found in some organisms and specialized cells. It depends on Mg(2+) as a cofactor.

It localises to the cytoplasm. It is found in the cytoskeleton. Tubulin is the major constituent of microtubules, a cylinder consisting of laterally associated linear protofilaments composed of alpha- and beta-tubulin heterodimers. Microtubules grow by the addition of GTP-tubulin dimers to the microtubule end, where a stabilizing cap forms. Below the cap, tubulin dimers are in GDP-bound state, owing to GTPase activity of alpha-tubulin. The sequence is that of Tubulin beta chain (benA56) from Aspergillus oryzae (strain ATCC 42149 / RIB 40) (Yellow koji mold).